A 249-amino-acid polypeptide reads, in one-letter code: MSGHSKWATIKRKKDAIDSKRGAIFTRVGKEITVAAKMGGGDPEGNPRLRLAILKAKSVNMPKDNIERAIKKGTGELEGVVYEECLYECFGPAGIAIMVSAVTDKKSRTTPEIKSILTKLGGSLATSGSVSRLFEKKGVIVLESSQIGEDKLVDLAVGEGAEDVINEGEVYRVITTPDDYESVLHALNEKGLKSEESEIRYIALVSSEIADKEVAKKVMKLIEQLDGHDDVTSVTSNFELAASLEKEFE.

The protein belongs to the TACO1 family.

The protein resides in the cytoplasm. In Leptospira borgpetersenii serovar Hardjo-bovis (strain JB197), this protein is Probable transcriptional regulatory protein LBJ_0543.